The sequence spans 116 residues: Immunoglobulin heavy variable 3-66 (116 aa).

A signal peptide spans 1–19 (MEFGLSWVFLVAILKGVQC). Residues 20-44 (EVQLVESGGGLIQPGGSLRLSCAAS) are framework-1. The 97-residue stretch at 20-116 (EVQLVESGGG…EDTAVYYCAR (97 aa)) folds into the Ig-like domain. A disulfide bridge links cysteine 41 with cysteine 114. The interval 45–52 (GFTVSSNY) is complementarity-determining-1. Positions 53 to 69 (MSWVRQAPGKGLEWVSV) are framework-2. The tract at residues 70 to 76 (IYSCGST) is complementarity-determining-2. Positions 77-114 (YYADSVKGRFTISRDNSKNTLYLQMNSLRAEDTAVYYC) are framework-3. The segment at 115 to 116 (AR) is complementarity-determining-3.

As to quaternary structure, immunoglobulins are composed of two identical heavy chains and two identical light chains; disulfide-linked.

Its subcellular location is the secreted. It is found in the cell membrane. In terms of biological role, v region of the variable domain of immunoglobulin heavy chains that participates in the antigen recognition. Immunoglobulins, also known as antibodies, are membrane-bound or secreted glycoproteins produced by B lymphocytes. In the recognition phase of humoral immunity, the membrane-bound immunoglobulins serve as receptors which, upon binding of a specific antigen, trigger the clonal expansion and differentiation of B lymphocytes into immunoglobulins-secreting plasma cells. Secreted immunoglobulins mediate the effector phase of humoral immunity, which results in the elimination of bound antigens. The antigen binding site is formed by the variable domain of one heavy chain, together with that of its associated light chain. Thus, each immunoglobulin has two antigen binding sites with remarkable affinity for a particular antigen. The variable domains are assembled by a process called V-(D)-J rearrangement and can then be subjected to somatic hypermutations which, after exposure to antigen and selection, allow affinity maturation for a particular antigen. The chain is Immunoglobulin heavy variable 3-66 from Homo sapiens (Human).